The following is a 321-amino-acid chain: Peroxidase 28 (321 aa).

The N-terminal stretch at 1 to 21 is a signal peptide; the sequence is MKIATFSVLLLLLFIFPVALA. Intrachain disulfides connect C32/C111, C65/C70, C117/C317, and C196/C228. H63 serves as the catalytic Proton acceptor. Residues D64, V67, G69, D71, and S73 each contribute to the Ca(2+) site. Residue P159 participates in substrate binding. Position 189 (H189) interacts with heme b. T190 lines the Ca(2+) pocket. Ca(2+) is bound by residues D238, T244, and D249.

It belongs to the peroxidase family. Classical plant (class III) peroxidase subfamily. The cofactor is heme b. It depends on Ca(2+) as a cofactor.

The protein localises to the secreted. The catalysed reaction is 2 a phenolic donor + H2O2 = 2 a phenolic radical donor + 2 H2O. Its function is as follows. Removal of H(2)O(2), oxidation of toxic reductants, biosynthesis and degradation of lignin, suberization, auxin catabolism, response to environmental stresses such as wounding, pathogen attack and oxidative stress. These functions might be dependent on each isozyme/isoform in each plant tissue. The protein is Peroxidase 28 (PER28) of Arabidopsis thaliana (Mouse-ear cress).